We begin with the raw amino-acid sequence, 278 residues long: Urease accessory protein UreD (278 aa).

It belongs to the UreD family. As to quaternary structure, ureD, UreF and UreG form a complex that acts as a GTP-hydrolysis-dependent molecular chaperone, activating the urease apoprotein by helping to assemble the nickel containing metallocenter of UreC. The UreE protein probably delivers the nickel.

It is found in the cytoplasm. Required for maturation of urease via the functional incorporation of the urease nickel metallocenter. The sequence is that of Urease accessory protein UreD from Staphylococcus aureus (strain JH1).